Consider the following 358-residue polypeptide: Low-specificity L-threonine aldolase 1 (358 aa).

Lys-207 carries the N6-(pyridoxal phosphate)lysine modification.

This sequence belongs to the threonine aldolase family. Pyridoxal 5'-phosphate serves as cofactor. In terms of tissue distribution, expressed in root tips, seedlings, carpels and seeds.

The enzyme catalyses L-threonine = acetaldehyde + glycine. It carries out the reaction L-allo-threonine = acetaldehyde + glycine. It functions in the pathway amino-acid degradation; L-threonine degradation via aldolase pathway; acetaldehyde and glycine from L-threonine: step 1/1. Its function is as follows. Threonine aldolase involved in threonine degradation to glycine. May play a role in the removal of L-allo-threonine. In Arabidopsis thaliana (Mouse-ear cress), this protein is Low-specificity L-threonine aldolase 1.